A 510-amino-acid chain; its full sequence is Bifunctional purine biosynthesis protein PurH (510 aa).

The 143-residue stretch at 1–143 (MTKRALISVS…KNHDAVLVLV (143 aa)) folds into the MGS-like domain.

It belongs to the PurH family.

It carries out the reaction (6R)-10-formyltetrahydrofolate + 5-amino-1-(5-phospho-beta-D-ribosyl)imidazole-4-carboxamide = 5-formamido-1-(5-phospho-D-ribosyl)imidazole-4-carboxamide + (6S)-5,6,7,8-tetrahydrofolate. The enzyme catalyses IMP + H2O = 5-formamido-1-(5-phospho-D-ribosyl)imidazole-4-carboxamide. It functions in the pathway purine metabolism; IMP biosynthesis via de novo pathway; 5-formamido-1-(5-phospho-D-ribosyl)imidazole-4-carboxamide from 5-amino-1-(5-phospho-D-ribosyl)imidazole-4-carboxamide (10-formyl THF route): step 1/1. The protein operates within purine metabolism; IMP biosynthesis via de novo pathway; IMP from 5-formamido-1-(5-phospho-D-ribosyl)imidazole-4-carboxamide: step 1/1. The protein is Bifunctional purine biosynthesis protein PurH of Deinococcus radiodurans (strain ATCC 13939 / DSM 20539 / JCM 16871 / CCUG 27074 / LMG 4051 / NBRC 15346 / NCIMB 9279 / VKM B-1422 / R1).